The chain runs to 211 residues: HTH-type transcriptional repressor FabR (211 aa).

Residues 10-70 (RTRRSLVEAA…TMVDESGLML (61 aa)) enclose the HTH tetR-type domain. The segment at residues 33–52 (SLREVAREAGIAPTSFYRHF) is a DNA-binding region (H-T-H motif).

In terms of assembly, homodimer.

It localises to the cytoplasm. Its function is as follows. Represses the transcription of fabB, involved in unsaturated fatty acid (UFA) biosynthesis. By controlling UFA production, FabR directly influences the physical properties of the membrane bilayer. This is HTH-type transcriptional repressor FabR from Cronobacter sakazakii (strain ATCC BAA-894) (Enterobacter sakazakii).